The chain runs to 40 residues: U12-ctenitoxin-Co1a (40 aa).

4 disulfide bridges follow: cysteine 2–cysteine 16, cysteine 9–cysteine 22, cysteine 15–cysteine 31, and cysteine 24–cysteine 29.

Expressed by the venom gland.

The protein resides in the secreted. Its function is as follows. Insecticidal neurotoxin that reversibly inhibits the N-methyl-D-aspartate (NMDA)-subtype of ionotropic glutamate receptor (GRIN) and inhibits inactivation of insect sodium channels (Nav). In vivo, is highly toxic to insects. The sequence is that of U12-ctenitoxin-Co1a from Ctenus ornatus (Brazilian spider).